The primary structure comprises 272 residues: 4-hydroxy-tetrahydrodipicolinate reductase (272 aa).

NAD(+) contacts are provided by residues 10–15 (GAGGRM), Glu-36, 100–102 (GTT), and 124–127 (SGNM). The Proton donor/acceptor role is filled by His-157. (S)-2,3,4,5-tetrahydrodipicolinate is bound at residue His-158. Lys-161 (proton donor) is an active-site residue. 167–168 (GT) is a (S)-2,3,4,5-tetrahydrodipicolinate binding site.

This sequence belongs to the DapB family.

Its subcellular location is the cytoplasm. It catalyses the reaction (S)-2,3,4,5-tetrahydrodipicolinate + NAD(+) + H2O = (2S,4S)-4-hydroxy-2,3,4,5-tetrahydrodipicolinate + NADH + H(+). It carries out the reaction (S)-2,3,4,5-tetrahydrodipicolinate + NADP(+) + H2O = (2S,4S)-4-hydroxy-2,3,4,5-tetrahydrodipicolinate + NADPH + H(+). It participates in amino-acid biosynthesis; L-lysine biosynthesis via DAP pathway; (S)-tetrahydrodipicolinate from L-aspartate: step 4/4. In terms of biological role, catalyzes the conversion of 4-hydroxy-tetrahydrodipicolinate (HTPA) to tetrahydrodipicolinate. The protein is 4-hydroxy-tetrahydrodipicolinate reductase of Bradyrhizobium sp. (strain ORS 278).